The primary structure comprises 377 residues: Protein RecA (377 aa).

76–83 (GPESSGKT) provides a ligand contact to ATP. A disordered region spans residues 346–377 (TNGNNGEDHEGTEPVEIEAEDAAPKKGKKGKH).

It belongs to the RecA family.

It localises to the cytoplasm. In terms of biological role, can catalyze the hydrolysis of ATP in the presence of single-stranded DNA, the ATP-dependent uptake of single-stranded DNA by duplex DNA, and the ATP-dependent hybridization of homologous single-stranded DNAs. It interacts with LexA causing its activation and leading to its autocatalytic cleavage. This Bdellovibrio bacteriovorus (strain ATCC 15356 / DSM 50701 / NCIMB 9529 / HD100) protein is Protein RecA.